Here is a 763-residue protein sequence, read N- to C-terminus: MTTLHNLGFPRIGARRELKQAQEAYWAGDLQQSELEHVGKSLRERHWALQADAGVDLMPVGDFAWYDHILEFSSLLGVVPSRFEQDANAPVNLDTLFRMARGRAPTGTPAAACEMTKWFDTNYHYLVPELAADQTFRIARESLFEQVEEAKAQGHNPKPVIPGPLTYLYLSKGDRFEGAEDSAKLALLDNLIPVYREILQRFANQGVQWVQIDEPILVLDLPDSWQRAYLRVYDQLASASQTKLLLATYFGGLGNNLFTALELPVHGLHLDRVRGNDDLGQVIPRLGDKVLSLGVINGRNIWRTDLDAALDNITALHNELGDRLWLAPSCSLLHCPVDLEQEDTLDNELKSWLSFAKQKLEELALLGGALRGNSNVNSGLQTQRAALQARGLSSRIHNPAVAQRLADASQLSRDRVSPFAERIAQQQHALQLPAFPTTTIGSFPQTREIRTARRDWKAGKLNDAQYQQQMQEEIARCIRYQEEVELDVLVHGEAERNDMVEYFGELLDGFAFTRFGWVQSYGSRCVKPPIIFGDVQRPQAMTVEWARYAQSLTHKPVKGMLTGPVTILQWSFVRDDQPRADTCRQIALALRDEVQDLEKAGIKVIQIDEPALREGLPLRQEEWTQYLDWAVDCFRLATVSVDDDTQIHTHMCYSEFNDIIEAIAALDADVITIETSRSNMELLDAFRDFHYPNDIGPGVYDIHSPNEPDVAWMVQLMEKAAERLPKERLWVNPDCGLKTRKWDETRAALANMVNAAKQLRQAS.

5-methyltetrahydropteroyltri-L-glutamate-binding positions include 16 to 19 (RELK) and Lys-117. Residues 440–442 (IGS) and Glu-493 each bind L-homocysteine. L-methionine contacts are provided by residues 440–442 (IGS) and Glu-493. 5-methyltetrahydropteroyltri-L-glutamate is bound by residues 524 to 525 (RC) and Trp-570. Asp-608 contacts L-homocysteine. Asp-608 provides a ligand contact to L-methionine. Glu-614 contributes to the 5-methyltetrahydropteroyltri-L-glutamate binding site. Positions 650, 652, and 674 each coordinate Zn(2+). The active-site Proton donor is the His-703. Cys-735 provides a ligand contact to Zn(2+).

Belongs to the vitamin-B12 independent methionine synthase family. Zn(2+) serves as cofactor.

The catalysed reaction is 5-methyltetrahydropteroyltri-L-glutamate + L-homocysteine = tetrahydropteroyltri-L-glutamate + L-methionine. It participates in amino-acid biosynthesis; L-methionine biosynthesis via de novo pathway; L-methionine from L-homocysteine (MetE route): step 1/1. In terms of biological role, catalyzes the transfer of a methyl group from 5-methyltetrahydrofolate to homocysteine resulting in methionine formation. This chain is 5-methyltetrahydropteroyltriglutamate--homocysteine methyltransferase, found in Alcanivorax borkumensis (strain ATCC 700651 / DSM 11573 / NCIMB 13689 / SK2).